A 327-amino-acid chain; its full sequence is Zinc transport protein ZntB (327 aa).

The Cytoplasmic portion of the chain corresponds to 1–273 (MEAIKGADVN…ARRTYTMSLM (273 aa)). Residues 274-294 (AMVFLPSTFLTGLFGVNLGGI) traverse the membrane as a helical segment. The Periplasmic segment spans residues 295-300 (PGGGWR). The helical transmembrane segment at 301-321 (FGFSLFCILLVVLIGGVALWL) threads the bilayer. The Cytoplasmic portion of the chain corresponds to 322 to 327 (HRSKWL).

Belongs to the CorA metal ion transporter (MIT) (TC 1.A.35) family.

It localises to the cell inner membrane. It carries out the reaction Zn(2+)(out) + H(+)(out) = Zn(2+)(in) + H(+)(in). Zinc transporter. Acts as a Zn(2+):proton symporter, which likely mediates zinc ion uptake. This is Zinc transport protein ZntB from Escherichia fergusonii (strain ATCC 35469 / DSM 13698 / CCUG 18766 / IAM 14443 / JCM 21226 / LMG 7866 / NBRC 102419 / NCTC 12128 / CDC 0568-73).